A 172-amino-acid chain; its full sequence is Adenine phosphoribosyltransferase (172 aa).

It belongs to the purine/pyrimidine phosphoribosyltransferase family. In terms of assembly, homodimer.

The protein resides in the cytoplasm. The catalysed reaction is AMP + diphosphate = 5-phospho-alpha-D-ribose 1-diphosphate + adenine. The protein operates within purine metabolism; AMP biosynthesis via salvage pathway; AMP from adenine: step 1/1. Catalyzes a salvage reaction resulting in the formation of AMP, that is energically less costly than de novo synthesis. The sequence is that of Adenine phosphoribosyltransferase from Clostridium botulinum (strain Eklund 17B / Type B).